A 429-amino-acid chain; its full sequence is D-amino acid dehydrogenase (429 aa).

3–17 serves as a coordination point for FAD; sequence VLILGSGVIGVTSAW.

It belongs to the DadA oxidoreductase family. The cofactor is FAD.

The enzyme catalyses a D-alpha-amino acid + A + H2O = a 2-oxocarboxylate + AH2 + NH4(+). It functions in the pathway amino-acid degradation; D-alanine degradation; NH(3) and pyruvate from D-alanine: step 1/1. In terms of biological role, oxidative deamination of D-amino acids. The chain is D-amino acid dehydrogenase from Xanthomonas euvesicatoria pv. vesicatoria (strain 85-10) (Xanthomonas campestris pv. vesicatoria).